The chain runs to 202 residues: NADH-quinone oxidoreductase subunit C (202 aa).

It belongs to the complex I 30 kDa subunit family. In terms of assembly, NDH-1 is composed of 14 different subunits. Subunits NuoB, C, D, E, F, and G constitute the peripheral sector of the complex.

It is found in the cell inner membrane. It catalyses the reaction a quinone + NADH + 5 H(+)(in) = a quinol + NAD(+) + 4 H(+)(out). Its function is as follows. NDH-1 shuttles electrons from NADH, via FMN and iron-sulfur (Fe-S) centers, to quinones in the respiratory chain. The immediate electron acceptor for the enzyme in this species is believed to be ubiquinone. Couples the redox reaction to proton translocation (for every two electrons transferred, four hydrogen ions are translocated across the cytoplasmic membrane), and thus conserves the redox energy in a proton gradient. This chain is NADH-quinone oxidoreductase subunit C, found in Brucella abortus (strain 2308).